We begin with the raw amino-acid sequence, 919 residues long: MTAPWRRLRSLVWEYWAGFLVCAFWIPDSRGMPHVIRIGGIFEYADGPNAQVMNAEEHAFRFSANIINRNRTLLPNTTLTYDIQRIHFHDSFEATKKACDQLALGVVAIFGPSQGSCTNAVQSICNALEVPHIQLRWKHHPLDNKDTFYVNLYPDYASLSHAILDLVQSLKWRSATVVYDDSTGLIRLQELIMAPSRYNIRLKIRQLPIDSDDSRPLLKEMKRGREFRIIFDCSHTMAAQILKQAMAMGMMTEYYHFIFTTLDLYALDLEPYRYSGVNLTGFRILNVDNPHVSAIVEKWAMERLQAAPRAESGLLDGVMMTDAALLYDAVHIVSVCYQRAPQMTVNSLQCHRHKAWRFGGRFMNFIKEAQWEGLTGRIVFNKTSGLRTDFDLDIISLKEDGLEKVGVWSPADGLNITEVAKGRGPNVTDSLTNRSLIVTTVLEEPFVMFRKSDRTLYGNDRFEGYCIDLLKELAHILGFSYEIRLVEDGKYGAQDDKGQWNGMVKELIDHKADLAVAPLTITHVREKAIDFSKPFMTLGVSILYRKPNGTNPSVFSFLNPLSPDIWMYVLLAYLGVSCVLFVIARFSPYEWYDAHPCNPGSEVVENNFTLLNSFWFGMGSLMQQGSELMPKALSTRIIGGIWWFFTLIIISSYTANLAAFLTVERMESPIDSADDLAKQTKIEYGAVKDGATMTFFKKSKISTFEKMWAFMSSKPSALVKNNEEGIQRTLTADYALLMESTTIEYITQRNCNLTQIGGLIDSKGYGIGTPMGSPYRDKITIAILQLQEEDKLHIMKEKWWRGSGCPEEENKEASALGIQKIGGIFIVLAAGLVLSVLVAVGEFIYKLRKTAEREQRSFCSTVADEIRFSLTCQRRLKHKPQPPMMVKTDAVINMHTFNDRRLPGKDSMSCSTSLAPVFP.

An N-terminal signal peptide occupies residues 1–31 (MTAPWRRLRSLVWEYWAGFLVCAFWIPDSRG). Over 32–563 (MPHVIRIGGI…VFSFLNPLSP (532 aa)) the chain is Extracellular. 7 N-linked (GlcNAc...) asparagine glycosylation sites follow: Asn70, Asn76, Asn278, Asn381, Asn415, Asn426, and Asn433. The cysteines at positions 99 and 350 are disulfide-linked. Positions 518, 520, and 525 each coordinate L-glutamate. 2 N-linked (GlcNAc...) asparagine glycosylation sites follow: Asn548 and Asn551. A helical transmembrane segment spans residues 564–584 (DIWMYVLLAYLGVSCVLFVIA). Topologically, residues 585–636 (RFSPYEWYDAHPCNPGSEVVENNFTLLNSFWFGMGSLMQQGSELMPKALSTR) are cytoplasmic. Residues 637–657 (IIGGIWWFFTLIIISSYTANL) form a helical membrane-spanning segment. The Extracellular portion of the chain corresponds to 658-820 (AAFLTVERME…KEASALGIQK (163 aa)). L-glutamate contacts are provided by Ala691, Thr692, and Glu739. Asn752 is a glycosylation site (N-linked (GlcNAc...) asparagine). A helical membrane pass occupies residues 821-841 (IGGIFIVLAAGLVLSVLVAVG). Over 842-919 (EFIYKLRKTA…CSTSLAPVFP (78 aa)) the chain is Cytoplasmic. A Phosphoserine modification is found at Ser869. Residue Lys887 forms a Glycyl lysine isopeptide (Lys-Gly) (interchain with G-Cter in SUMO1) linkage.

The protein belongs to the glutamate-gated ion channel (TC 1.A.10.1) family. GRIK3 subfamily. In terms of assembly, homotetramer, and heterotetramer with either GRIK4 or GRIK5. Can form functional heteromeric receptors with GRIK2. Interacts with PRKCABP. Interacts with NETO2. Detected in whole brain, cerebellum, brain cortex and hippocampus.

It localises to the cell membrane. The protein localises to the postsynaptic cell membrane. The enzyme catalyses Ca(2+)(in) = Ca(2+)(out). Glutamate-gated receptor activity inhibited by spermine. In terms of biological role, ionotropic glutamate receptor that functions as a cation-permeable ligand-gated ion channel, gated by L-glutamate and the glutamatergic agonist kainic acid. Binding of the excitatory neurotransmitter L-glutamate induces a conformation change, leading to the opening of the cation channel, and thereby converts the chemical signal to an electrical impulse. The receptor then desensitizes rapidly and enters a transient inactive state, characterized by the presence of bound agonist. In association with GRIK2, involved in presynaptic facilitation of glutamate release at hippocampal mossy fiber synapses. In Mus musculus (Mouse), this protein is Glutamate receptor ionotropic, kainate 3 (Grik3).